The sequence spans 283 residues: MRGGWGRFPPKSREVAAISGKHKPKLGQNFLVSEAACRSIVEALGNLGARTVVEIGPGKGAITELLANRAERLIAIELDRELAPRLRERFARRETVTVIEDDVLRVDLSALARPGEKLLVVGNLPYYMTSEILLHLIRHEAAIERAVVMVQREVADRVAAGPGSRDYGLLSVTAQLHARVEKLLTLPPGAFSPPPEVYSTVLRWTMHSRTDELGVDPTRFTGFLRSCFAQKRKTLGNNLRAAKYEPAAIAGAMQSAGVAAGVRAEELSLEALAALWRTLEDRS.

6 residues coordinate S-adenosyl-L-methionine: Asn-29, Leu-31, Gly-56, Glu-77, Asp-102, and Asn-123.

Belongs to the class I-like SAM-binding methyltransferase superfamily. rRNA adenine N(6)-methyltransferase family. RsmA subfamily.

The protein resides in the cytoplasm. It catalyses the reaction adenosine(1518)/adenosine(1519) in 16S rRNA + 4 S-adenosyl-L-methionine = N(6)-dimethyladenosine(1518)/N(6)-dimethyladenosine(1519) in 16S rRNA + 4 S-adenosyl-L-homocysteine + 4 H(+). In terms of biological role, specifically dimethylates two adjacent adenosines (A1518 and A1519) in the loop of a conserved hairpin near the 3'-end of 16S rRNA in the 30S particle. May play a critical role in biogenesis of 30S subunits. The protein is Ribosomal RNA small subunit methyltransferase A of Acidobacterium capsulatum (strain ATCC 51196 / DSM 11244 / BCRC 80197 / JCM 7670 / NBRC 15755 / NCIMB 13165 / 161).